A 226-amino-acid chain; its full sequence is ATP synthase F(0) complex subunit a (226 aa).

The next 6 membrane-spanning stretches (helical) occupy residues 6–26 (FATFITPTILGITTLPIIMLF), 68–88 (WALMLMSLILFIASTNLLGLL), 97–117 (QLSMNIGMAIPLWLATVLMGF), 138–158 (VPMLIIIETISLFIQPVALAV), 164–184 (ITAGHLLIHLIGSATLALCSI), and 193–213 (FIILFLLTILELAVAMIQAYV).

It belongs to the ATPase A chain family. As to quaternary structure, component of the ATP synthase complex composed at least of ATP5F1A/subunit alpha, ATP5F1B/subunit beta, ATP5MC1/subunit c (homooctomer), MT-ATP6/subunit a, MT-ATP8/subunit 8, ATP5ME/subunit e, ATP5MF/subunit f, ATP5MG/subunit g, ATP5MK/subunit k, ATP5MJ/subunit j, ATP5F1C/subunit gamma, ATP5F1D/subunit delta, ATP5F1E/subunit epsilon, ATP5PF/subunit F6, ATP5PB/subunit b, ATP5PD/subunit d, ATP5PO/subunit OSCP. ATP synthase complex consists of a soluble F(1) head domain (subunits alpha(3) and beta(3)) - the catalytic core - and a membrane F(0) domain - the membrane proton channel (subunits c, a, 8, e, f, g, k and j). These two domains are linked by a central stalk (subunits gamma, delta, and epsilon) rotating inside the F1 region and a stationary peripheral stalk (subunits F6, b, d, and OSCP). Interacts with DNAJC30; interaction is direct.

The protein resides in the mitochondrion inner membrane. The catalysed reaction is H(+)(in) = H(+)(out). Functionally, subunit a, of the mitochondrial membrane ATP synthase complex (F(1)F(0) ATP synthase or Complex V) that produces ATP from ADP in the presence of a proton gradient across the membrane which is generated by electron transport complexes of the respiratory chain. ATP synthase complex consist of a soluble F(1) head domain - the catalytic core - and a membrane F(1) domain - the membrane proton channel. These two domains are linked by a central stalk rotating inside the F(1) region and a stationary peripheral stalk. During catalysis, ATP synthesis in the catalytic domain of F(1) is coupled via a rotary mechanism of the central stalk subunits to proton translocation. With the subunit c (ATP5MC1), forms the proton-conducting channel in the F(0) domain, that contains two crucial half-channels (inlet and outlet) that facilitate proton movement from the mitochondrial intermembrane space (IMS) into the matrix. Protons are taken up via the inlet half-channel and released through the outlet half-channel, following a Grotthuss mechanism. In Osphranter robustus (Wallaroo), this protein is ATP synthase F(0) complex subunit a.